The following is a 541-amino-acid chain: Chaperonin GroEL 2 (541 aa).

Residues 29–32 (TLGP), 86–90 (DGTTT), G413, and D492 each bind ATP.

Belongs to the chaperonin (HSP60) family. Forms a cylinder of 14 subunits composed of two heptameric rings stacked back-to-back. Interacts with the co-chaperonin GroES.

Its subcellular location is the cytoplasm. It catalyses the reaction ATP + H2O + a folded polypeptide = ADP + phosphate + an unfolded polypeptide.. In terms of biological role, together with its co-chaperonin GroES, plays an essential role in assisting protein folding. The GroEL-GroES system forms a nano-cage that allows encapsulation of the non-native substrate proteins and provides a physical environment optimized to promote and accelerate protein folding. The sequence is that of Chaperonin GroEL 2 from Nocardia farcinica (strain IFM 10152).